Reading from the N-terminus, the 341-residue chain is Alanine racemase (341 aa).

Lysine 33 serves as the catalytic Proton acceptor; specific for D-alanine. Lysine 33 is subject to N6-(pyridoxal phosphate)lysine. Residue arginine 126 coordinates substrate. Tyrosine 236 acts as the Proton acceptor; specific for L-alanine in catalysis. Methionine 284 is a substrate binding site.

This sequence belongs to the alanine racemase family. Requires pyridoxal 5'-phosphate as cofactor.

It carries out the reaction L-alanine = D-alanine. It functions in the pathway amino-acid biosynthesis; D-alanine biosynthesis; D-alanine from L-alanine: step 1/1. Catalyzes the interconversion of L-alanine and D-alanine. This chain is Alanine racemase (alr), found in Aquifex pyrophilus.